The following is a 63-amino-acid chain: Sarcotoxin-1A (63 aa).

An N-terminal signal peptide occupies residues 1–23 (MNFQNIFIFVALILAVFAGQSQA). An Arginine amide modification is found at arginine 62.

The protein belongs to the cecropin family.

It is found in the secreted. Functionally, sarcotoxins, which are potent bactericidal proteins, are produced in response to injury. They are cytotoxic to both Gram-positive and Gram-negative bacteria. The sequence is that of Sarcotoxin-1A from Sarcophaga peregrina (Flesh fly).